The primary structure comprises 525 residues: Vesicular inhibitory amino acid transporter (525 aa).

The Cytoplasmic portion of the chain corresponds to Met-1–Met-132. The chain crosses the membrane as a helical span at residues Phe-133–Ile-153. Residues Phe-154–Arg-204 are Lumenal, vesicle-facing. Tyr-186 is modified (3'-nitrotyrosine). A helical membrane pass occupies residues Val-205–Ser-225. At Gly-226–Lys-265 the chain is on the cytoplasmic side. Residues Phe-266 to Leu-286 form a helical membrane-spanning segment. Over Ser-287–Lys-305 the chain is Lumenal, vesicle. A helical transmembrane segment spans residues Phe-306–Leu-326. Topologically, residues Glu-327 to Asn-341 are cytoplasmic. Residues Trp-342–Trp-362 traverse the membrane as a helical segment. Topologically, residues Ala-363–Asn-383 are lumenal, vesicle. Residues Ile-384–Val-404 traverse the membrane as a helical segment. The Cytoplasmic portion of the chain corresponds to Leu-405–Ala-438. Residues Leu-439–Leu-459 traverse the membrane as a helical segment. The Lumenal, vesicle portion of the chain corresponds to Thr-460 to Gly-461. Residues Ser-462–Trp-482 traverse the membrane as a helical segment. At Arg-483 to Gln-489 the chain is on the cytoplasmic side. A helical membrane pass occupies residues Val-490–His-510. Over Ser-511–Asp-525 the chain is Lumenal, vesicle.

Belongs to the amino acid/polyamine transporter 2 family. As to expression, brain. Expressed at high levels within the neocortex, hippocampus, cerebellum, striatum, septal nuclei and the reticular nucleus of the thalamus. Also expressed in islets where it is more abundant in the peripheral/mantle region. Highly expressed in the nerve endings of GABA neurons in the brain and spinal cord but also in glycinergic nerve endings. Expressed in glycine-, GABA- or GABA- and glycine-containing boutons.

The protein localises to the cytoplasmic vesicle. It localises to the secretory vesicle. Its subcellular location is the synaptic vesicle membrane. The protein resides in the presynapse. The enzyme catalyses beta-alanine(out) + n H(+)(in) = beta-alanine(in) + n H(+)(out). The catalysed reaction is 4-aminobutanoate(out) + n H(+)(in) = 4-aminobutanoate(in) + n H(+)(out). It catalyses the reaction glycine(out) + n H(+)(in) = glycine(in) + n H(+)(out). Antiporter that exchanges vesicular protons for cytosolic 4-aminobutanoate or to a lesser extend glycine, thus allowing their secretion from nerve terminals. The transport is equally dependent on the chemical and electrical components of the proton gradient. May also transport beta-alanine. Acidification of GABAergic synaptic vesicles is a prerequisite for 4-aminobutanoate uptake. The sequence is that of Vesicular inhibitory amino acid transporter from Rattus norvegicus (Rat).